The sequence spans 1031 residues: Putative glycine dehydrogenase (decarboxylating), mitochondrial (1031 aa).

The N-terminal 49 residues, 1–49 (MFDSFMKRNQLALIMFRACSKLQYHGVNTSLSRHLFLAKRNLSISSACL), are a transit peptide targeting the mitochondrion. At K783 the chain carries N6-(pyridoxal phosphate)lysine.

Belongs to the GcvP family. Pyridoxal 5'-phosphate is required as a cofactor.

Its subcellular location is the mitochondrion. It catalyses the reaction N(6)-[(R)-lipoyl]-L-lysyl-[glycine-cleavage complex H protein] + glycine + H(+) = N(6)-[(R)-S(8)-aminomethyldihydrolipoyl]-L-lysyl-[glycine-cleavage complex H protein] + CO2. In terms of biological role, the glycine cleavage system catalyzes the degradation of glycine. The P protein binds the alpha-amino group of glycine through its pyridoxal phosphate cofactor; CO(2) is released and the remaining methylamine moiety is then transferred to the lipoamide cofactor of the H protein. The protein is Putative glycine dehydrogenase (decarboxylating), mitochondrial (gcv2) of Schizosaccharomyces pombe (strain 972 / ATCC 24843) (Fission yeast).